The following is a 360-amino-acid chain: GTPase Obg (360 aa).

An Obg domain is found at 1–156; that stretch reads MFVDSVEIII…KCVRLELKLI (156 aa). In terms of domain architecture, OBG-type G spans 157–360; it reads ADIGLVGFPN…LKFVLLEALP (204 aa). Residues 163 to 170, 188 to 192, 210 to 213, 279 to 282, and 341 to 343 each bind GTP; these read GFPNAGKS, FTTLV, DIPG, NKCD, and SAV. Mg(2+)-binding residues include Ser170 and Thr190.

It belongs to the TRAFAC class OBG-HflX-like GTPase superfamily. OBG GTPase family. In terms of assembly, monomer. Mg(2+) is required as a cofactor.

It is found in the cytoplasm. An essential GTPase which binds GTP, GDP and possibly (p)ppGpp with moderate affinity, with high nucleotide exchange rates and a fairly low GTP hydrolysis rate. Plays a role in control of the cell cycle, stress response, ribosome biogenesis and in those bacteria that undergo differentiation, in morphogenesis control. This Helicobacter acinonychis (strain Sheeba) protein is GTPase Obg.